We begin with the raw amino-acid sequence, 398 residues long: Succinate--CoA ligase [ADP-forming] subunit beta (398 aa).

The ATP-grasp domain occupies 9–253 (KEILNSFGVR…VREENATEVE (245 aa)). ATP-binding positions include lysine 50, 57 to 59 (GRG), valine 106, and glutamate 116. Positions 208 and 222 each coordinate Mg(2+). Residues asparagine 273 and 330–332 (GIV) contribute to the substrate site.

The protein belongs to the succinate/malate CoA ligase beta subunit family. Heterotetramer of two alpha and two beta subunits. Requires Mg(2+) as cofactor.

The enzyme catalyses succinate + ATP + CoA = succinyl-CoA + ADP + phosphate. It catalyses the reaction GTP + succinate + CoA = succinyl-CoA + GDP + phosphate. It participates in carbohydrate metabolism; tricarboxylic acid cycle; succinate from succinyl-CoA (ligase route): step 1/1. Succinyl-CoA synthetase functions in the citric acid cycle (TCA), coupling the hydrolysis of succinyl-CoA to the synthesis of either ATP or GTP and thus represents the only step of substrate-level phosphorylation in the TCA. The beta subunit provides nucleotide specificity of the enzyme and binds the substrate succinate, while the binding sites for coenzyme A and phosphate are found in the alpha subunit. This Christiangramia forsetii (strain DSM 17595 / CGMCC 1.15422 / KT0803) (Gramella forsetii) protein is Succinate--CoA ligase [ADP-forming] subunit beta.